The primary structure comprises 270 residues: Undecaprenyl-diphosphatase (270 aa).

The next 8 membrane-spanning stretches (helical) occupy residues 14 to 34 (GLTE…PTFL), 40 to 60 (GITF…LYFW), 88 to 108 (FYII…ETTI), 117 to 137 (SLIA…DTSG), 146 to 166 (ITLK…IPGV), 189 to 209 (FSFL…LSGL), 221 to 241 (PLLI…AFLL), and 249 to 269 (LYPF…FINF).

This sequence belongs to the UppP family.

Its subcellular location is the cell inner membrane. The catalysed reaction is di-trans,octa-cis-undecaprenyl diphosphate + H2O = di-trans,octa-cis-undecaprenyl phosphate + phosphate + H(+). Its function is as follows. Catalyzes the dephosphorylation of undecaprenyl diphosphate (UPP). Confers resistance to bacitracin. The sequence is that of Undecaprenyl-diphosphatase from Geotalea daltonii (strain DSM 22248 / JCM 15807 / FRC-32) (Geobacter daltonii).